We begin with the raw amino-acid sequence, 203 residues long: Peptidyl-tRNA hydrolase (203 aa).

Tyrosine 16 contributes to the tRNA binding site. The Proton acceptor role is filled by histidine 21. Tyrosine 68, asparagine 70, and asparagine 116 together coordinate tRNA.

It belongs to the PTH family. In terms of assembly, monomer.

The protein localises to the cytoplasm. It catalyses the reaction an N-acyl-L-alpha-aminoacyl-tRNA + H2O = an N-acyl-L-amino acid + a tRNA + H(+). Functionally, hydrolyzes ribosome-free peptidyl-tRNAs (with 1 or more amino acids incorporated), which drop off the ribosome during protein synthesis, or as a result of ribosome stalling. Its function is as follows. Catalyzes the release of premature peptidyl moieties from peptidyl-tRNA molecules trapped in stalled 50S ribosomal subunits, and thus maintains levels of free tRNAs and 50S ribosomes. This chain is Peptidyl-tRNA hydrolase, found in Nostoc sp. (strain PCC 7120 / SAG 25.82 / UTEX 2576).